The primary structure comprises 60 residues: MAVQQNKKSPSKRGMHRSHNALALPGIAVEPTSGEVHLRHHISPNGFYRGRQVLKPKSEA.

Disordered stretches follow at residues M1–A28 and H41–A60. Over residues S9 to H19 the composition is skewed to basic residues.

It belongs to the bacterial ribosomal protein bL32 family.

The polypeptide is Large ribosomal subunit protein bL32 (Verminephrobacter eiseniae (strain EF01-2)).